Reading from the N-terminus, the 149-residue chain is Arginine repressor (149 aa).

The protein belongs to the ArgR family.

Its subcellular location is the cytoplasm. Its pathway is amino-acid biosynthesis; L-arginine biosynthesis [regulation]. Regulates arginine biosynthesis genes. This Listeria innocua serovar 6a (strain ATCC BAA-680 / CLIP 11262) protein is Arginine repressor.